The primary structure comprises 578 residues: Moesin/ezrin/radixin homolog 1 (578 aa).

One can recognise an FERM domain in the interval 1–296 (MSPKALNVRV…GNHELYMRRR (296 aa)). The segment at 463–555 (ASTTPQHHHV…HRENVRQGRD (93 aa)) is disordered. Over residues 475–484 (DENENEEELT) the composition is skewed to acidic residues. The span at 492-555 (VSRDLDTDEH…HRENVRQGRD (64 aa)) shows a compositional bias: basic and acidic residues. The residue at position 559 (Thr559) is a Phosphothreonine.

Interacts with wgn. Interacts with Mer and arm at the adherens junction. Interacts with cytoskeletal actin at apical buds of microvilli in the precellularised embryo. Interacts with PCID2 (possibly via FERM domain). In terms of processing, phosphorylated on Thr-559. In the oocyte this phosphorylation is induced by phosphatidylinositol 4,5-bisphosphate (PtdIns[4,5]P(2)) generated by sktl.

The protein localises to the cell junction. Its subcellular location is the adherens junction. It localises to the cell projection. The protein resides in the microvillus. It is found in the rhabdomere. The protein localises to the cell membrane. Its subcellular location is the cytoplasm. It localises to the cytoskeleton. The protein resides in the cell cortex. It is found in the cilium. The protein localises to the flagellum. Its subcellular location is the nucleus. It localises to the nucleoplasm. The protein resides in the chromosome. Involved in connections of major cytoskeletal structures to the plasma membrane. Together with wgn, involved in control of axon targeting of R8 and R2-R5 photoreceptors, independent of egr. In the nucleus, recruited to sites of active transcription by RNA polymerase II where it has a role in nuclear mRNA export together with the mRNA export factor PCID2 and other messenger ribonucleoprotein (mRNP) particles. This Drosophila melanogaster (Fruit fly) protein is Moesin/ezrin/radixin homolog 1 (Moe).